Consider the following 1201-residue polypeptide: uncharacterized protein (1201 aa).

The chain crosses the membrane as a helical span at residues 140–160; it reads IIINLIFFFAFIIVGIYLFKP. Coiled-coil stretches lie at residues 420–459 and 536–574; these read QKKQ…AELN and AIKA…ITKM.

Its subcellular location is the cell membrane. This is an uncharacterized protein from Bacillus subtilis (strain 168).